A 970-amino-acid chain; its full sequence is Serine/threonine-protein kinase PLK4 (970 aa).

The Protein kinase domain maps to 12–265 (FKVGNLLGKG…LSSVLDHPFM (254 aa)). ATP-binding positions include 18–26 (LGKGSFAGV) and lysine 41. An N6-acetyllysine mark is found at lysine 45 and lysine 46. Aspartate 136 functions as the Proton acceptor in the catalytic mechanism. Residues 324–373 (VFPKNKSSSDFSSSGDGNSFYTQWGNQETSNSGRGRVIQDAEERPHSRYL) are disordered. Positions 327 to 343 (KNKSSSDFSSSGDGNSF) are enriched in low complexity. The segment covering 344 to 356 (YTQWGNQETSNSG) has biased composition (polar residues). The segment covering 360–369 (VIQDAEERPH) has biased composition (basic and acidic residues). Serine 401 carries the phosphoserine modification. Residues 498 to 540 (ISPTRDFQGHPDLQKDTSKNAWTDTKVKKNSDASDNAHSVKQP) are disordered. Basic and acidic residues predominate over residues 504-515 (FQGHPDLQKDTS). Residues 530–540 (ASDNAHSVKQP) show a composition bias toward polar residues. Residues 586–699 (TLRSITSPLV…SRFVQLVRSK (114 aa)) enclose the Cryptic POLO box 1 (CPB1) domain. Residue serine 665 is modified to Phosphoserine. Positions 700 to 813 (SPKITYFTRY…GRKPGSTSSP (114 aa)) constitute a Cryptic POLO box 2 (CPB2) domain. Positions 808 to 829 (GSTSSPKALSPPPSVDSNYPTR) are disordered. Phosphoserine is present on serine 817. Positions 886–964 (QLLKSVFVKN…LSSILLMFSN (79 aa)) constitute a POLO box domain.

The protein belongs to the protein kinase superfamily. Ser/Thr protein kinase family. CDC5/Polo subfamily. Homodimer. Interacts with CEP152 (via N-terminus). Interacts with CEP78; this interaction may be important for proper PLK4 localization to the centriole and PLK4-induced overduplication of centrioles. Interacts with CEP131. Interacts simultaneously with TENT5C and CEP192. Interacts with TENT5C; this interaction leads to the TENT5C recruitment in the centrosome. Interacts with CEP85; this interaction may be important in cell migration and centriole assembly. Post-translationally, ubiquitinated; leading to its degradation by the proteasome. Deubiquitinated by USP54; leading to PLK4 stabilization. Tyrosine-phosphorylated by TEC. In terms of processing, acetylation by KAT2A and KAT2B impairs kinase activity by shifting the kinase to an inactive conformation.

Its subcellular location is the cytoplasm. The protein resides in the cytoskeleton. It is found in the microtubule organizing center. The protein localises to the centrosome. It localises to the centriole. Its subcellular location is the nucleus. The protein resides in the nucleolus. It is found in the cleavage furrow. It carries out the reaction L-seryl-[protein] + ATP = O-phospho-L-seryl-[protein] + ADP + H(+). It catalyses the reaction L-threonyl-[protein] + ATP = O-phospho-L-threonyl-[protein] + ADP + H(+). Functionally, serine/threonine-protein kinase that plays a central role in centriole duplication. Able to trigger procentriole formation on the surface of the parental centriole cylinder, leading to the recruitment of centriole biogenesis proteins such as SASS6, CPAP, CCP110, CEP135 and gamma-tubulin. When overexpressed, it is able to induce centrosome amplification through the simultaneous generation of multiple procentrioles adjoining each parental centriole during S phase. Phosphorylates 'Ser-151' of FBXW5 during the G1/S transition, leading to inhibit FBXW5 ability to ubiquitinate SASS6. Its central role in centriole replication suggests a possible role in tumorigenesis, centrosome aberrations being frequently observed in tumors. Also involved in deuterosome-mediated centriole amplification in multiciliated that can generate more than 100 centrioles. Also involved in trophoblast differentiation by phosphorylating HAND1, leading to disrupt the interaction between HAND1 and MDFIC and activate HAND1. Phosphorylates CDC25C and CHEK2. Required for the recruitment of STIL to the centriole and for STIL-mediated centriole amplification. Phosphorylates CEP131 and PCM1 which is essential for proper organization and integrity of centriolar satellites. This Pongo abelii (Sumatran orangutan) protein is Serine/threonine-protein kinase PLK4.